The sequence spans 66 residues: Sodium/potassium-transporting ATPase subunit gamma (66 aa).

Residues 29–46 (GGLIFAGLAFVVGLLILL) form a helical membrane-spanning segment.

The protein belongs to the FXYD family. As to quaternary structure, regulatory subunit of the sodium/potassium-transporting ATPase which is composed of a catalytic alpha subunit, an auxiliary non-catalytic beta subunit and an additional regulatory subunit. Highest levels expressed in the kidney and spleen. Restricted to the basolateral membrane in renal epithelial cells and varies in its level of expression along the nephron.

It is found in the membrane. Functionally, may be involved in forming the receptor site for cardiac glycoside binding or may modulate the transport function of the sodium ATPase. The chain is Sodium/potassium-transporting ATPase subunit gamma (Fxyd2) from Rattus norvegicus (Rat).